The following is a 469-amino-acid chain: Aspartyl/glutamyl-tRNA(Asn/Gln) amidotransferase subunit B (469 aa).

It belongs to the GatB/GatE family. GatB subfamily. As to quaternary structure, heterotrimer of A, B and C subunits.

It catalyses the reaction L-glutamyl-tRNA(Gln) + L-glutamine + ATP + H2O = L-glutaminyl-tRNA(Gln) + L-glutamate + ADP + phosphate + H(+). The enzyme catalyses L-aspartyl-tRNA(Asn) + L-glutamine + ATP + H2O = L-asparaginyl-tRNA(Asn) + L-glutamate + ADP + phosphate + 2 H(+). In terms of biological role, allows the formation of correctly charged Asn-tRNA(Asn) or Gln-tRNA(Gln) through the transamidation of misacylated Asp-tRNA(Asn) or Glu-tRNA(Gln) in organisms which lack either or both of asparaginyl-tRNA or glutaminyl-tRNA synthetases. The reaction takes place in the presence of glutamine and ATP through an activated phospho-Asp-tRNA(Asn) or phospho-Glu-tRNA(Gln). In Methanococcus maripaludis (strain DSM 14266 / JCM 13030 / NBRC 101832 / S2 / LL), this protein is Aspartyl/glutamyl-tRNA(Asn/Gln) amidotransferase subunit B.